Here is a 367-residue protein sequence, read N- to C-terminus: snRNA-activating protein complex subunit 1 (367 aa).

Positions 1 to 168 (MGTPPGLQTD…EEFKDPSDRV (168 aa)) are SNAPC3-binding. The interval 164–268 (PSDRVMKLIT…AESLAKIKSK (105 aa)) is SNAPC4-binding. Disordered stretches follow at residues 228–254 (KDRK…QETE) and 278–367 (KSRR…KRKH). Residues 238–254 (KINDGEEKMEGNSQETE) are compositionally biased toward basic and acidic residues. Phosphoserine is present on residues S289 and S290. Residues 292 to 301 (CDSASGQGQV) show a composition bias toward polar residues.

In terms of assembly, part of the SNAPc complex composed of 5 subunits: SNAPC1, SNAPC2, SNAPC3, SNAPC4 and SNAPC5. SNAPC1 interacts with SNAPC3, SNAPC4 and TBP.

The protein resides in the nucleus. Functionally, part of the SNAPc complex required for the transcription of both RNA polymerase II and III small-nuclear RNA genes. Binds to the proximal sequence element (PSE), a non-TATA-box basal promoter element common to these 2 types of genes. Recruits TBP and BRF2 to the U6 snRNA TATA box. The chain is snRNA-activating protein complex subunit 1 (SNAPC1) from Macaca fascicularis (Crab-eating macaque).